Reading from the N-terminus, the 575-residue chain is Preprotein translocase subunit SCY2, chloroplastic (575 aa).

A chloroplast-targeting transit peptide spans M1–C34. The next 10 helical transmembrane spans lie at F157 to F177, L206 to L226, I251 to L271, V285 to T305, I306 to G326, L346 to V366, T414 to L434, G447 to F467, F509 to L529, and S531 to I551.

Belongs to the SecY/SEC61-alpha family. Part of a second Sec protein translocation apparatus. Interacts probably with SECA2. As to expression, ubiquitous.

The protein localises to the plastid. The protein resides in the chloroplast membrane. It localises to the amyloplast membrane. It is found in the chloroplast thylakoid membrane. Functionally, involved in protein export. Probably interacts with other proteins to allow the postimport or conservative sorting pathway for inner membrane proteins in plastids. Central subunit of the protein translocation channel SecYE. Consists of two halves formed by TMs 1-5 and 6-10. These two domains form a lateral gate at the front which open onto the bilayer between TMs 2 and 7, and are clamped together by SecE at the back. The channel is closed by both a pore ring composed of hydrophobic SecY resides and a short helix (helix 2A) on the extracellular side of the membrane which forms a plug. The sequence is that of Preprotein translocase subunit SCY2, chloroplastic (SCY2) from Arabidopsis thaliana (Mouse-ear cress).